A 386-amino-acid polypeptide reads, in one-letter code: Prostatic acid phosphatase (386 aa).

The N-terminal stretch at Met-1 to Ala-32 is a signal peptide. Residue Arg-43 coordinates substrate. His-44 acts as the Nucleophile in catalysis. A substrate-binding site is contributed by Arg-47. N-linked (GlcNAc...) asparagine glycosylation is present at Asn-94. Substrate is bound at residue Arg-111. 3 cysteine pairs are disulfide-bonded: Cys-161-Cys-372, Cys-215-Cys-313, and Cys-347-Cys-351. Asn-220 carries N-linked (GlcNAc...) asparagine glycosylation. His-289 is a substrate binding site. Residue Asp-290 is the Proton donor of the active site. Asn-333 carries N-linked (GlcNAc...) asparagine glycosylation.

It belongs to the histidine acid phosphatase family. As to quaternary structure, homodimer; dimer formation is required for phosphatase activity. Post-translationally, N-glycosylated. High mannose content, partially sialylated and fucosylated biantennary complex. Also fucosylated with partially sialylated triantennary complex oligosaccharides. In terms of processing, proteolytically cleaved in seminal fluid to produce several peptides. Peptide PAPf39, the most prominent, forms amyloid beta-sheet fibrils, SEVI (semen-derived enhancer of viral infection). Highly expressed in the prostate, restricted to glandular and ductal epithelial cells. Also expressed in bladder, kidney, pancreas, lung, cervix, testis and ovary. Weak expression in a subset of pancreatic islet cells, squamous epithelia, the pilosebaceous unit, colonic neuroendocrine cells and skin adnexal structures. Low expression in prostate carcinoma cells and tissues. As to expression, widely expressed. Expressed in the sarcolemma of skeletal muscle.

It is found in the secreted. The protein resides in the cell membrane. Its subcellular location is the lysosome membrane. The protein localises to the nucleus. It localises to the cytoplasm. It is found in the cytosol. The enzyme catalyses a phosphate monoester + H2O = an alcohol + phosphate. It catalyses the reaction 1-(9Z-octadecenoyl)-sn-glycero-3-phosphate + H2O = 1-(9Z-octadecenoyl)-sn-glycerol + phosphate. The catalysed reaction is a ribonucleoside 5'-phosphate + H2O = a ribonucleoside + phosphate. It carries out the reaction O-phospho-L-tyrosyl-[protein] + H2O = L-tyrosyl-[protein] + phosphate. With respect to regulation, phosphatase activity inhibited by L(+)-tartrate, and by its derivative, alpha-benzylaminobenzylphosphonic acid. A non-specific tyrosine phosphatase that dephosphorylates a diverse number of substrates under acidic conditions (pH 4-6) including alkyl, aryl, and acyl orthophosphate monoesters and phosphorylated proteins. Has lipid phosphatase activity and inactivates lysophosphatidic acid in seminal plasma. Functionally, tyrosine phosphatase that acts as a tumor suppressor of prostate cancer through dephosphorylation of ERBB2 and deactivation of MAPK-mediated signaling. In addition to its tyrosine phosphatase activity has ecto-5'-nucleotidase activity in dorsal root ganglion (DRG) neurons. Generates adenosine from AMP which acts as a pain suppressor. In terms of biological role, (Microbial infection) Forms amyloid beta-sheet fibrils in semen. These fibrils, termed SEVI (semen-derived enhancer of viral infection) capture HIV virions, attach them to target cells and enhance infection. SEVI amyloid fibrils are degraded by polyphenol epigallocatechin-3-gallate (EGCG), a constituent of green tea. Target cell attachment and enhancement of HIV infection is inhibited by surfen. Also similarly boosts XMRV (xenotropic murine leukemia virus-related virus) infection. The polypeptide is Prostatic acid phosphatase (Homo sapiens (Human)).